We begin with the raw amino-acid sequence, 170 residues long: MGVEQPLGDNIVTASLDGLVNWARKSSIWPMTFGLACCAIEMMATGAAKHDLDRFGIIFRASPRQSDCIIIAGTVTKKMLPVIKTVYEQMPEPKWVIAMGACACSGGVFDTYSVVQGVDEALPVDVYIPGCPPRPEALLYGLMKLQDKIGKERNSFGSAIGLGDRLEPAA.

Positions 37, 38, 102, and 131 each coordinate [4Fe-4S] cluster.

The protein belongs to the complex I 20 kDa subunit family. In terms of assembly, NDH-1 is composed of 14 different subunits. Subunits NuoB, C, D, E, F, and G constitute the peripheral sector of the complex. Requires [4Fe-4S] cluster as cofactor.

It is found in the cell inner membrane. The enzyme catalyses a quinone + NADH + 5 H(+)(in) = a quinol + NAD(+) + 4 H(+)(out). Functionally, NDH-1 shuttles electrons from NADH, via FMN and iron-sulfur (Fe-S) centers, to quinones in the respiratory chain. The immediate electron acceptor for the enzyme in this species is believed to be ubiquinone. Couples the redox reaction to proton translocation (for every two electrons transferred, four hydrogen ions are translocated across the cytoplasmic membrane), and thus conserves the redox energy in a proton gradient. The sequence is that of NADH-quinone oxidoreductase subunit B from Geotalea uraniireducens (strain Rf4) (Geobacter uraniireducens).